We begin with the raw amino-acid sequence, 65 residues long: MPKIKTRRSAAKRFSQTGSGKFKRRRQNLRHILTKKAASRKMRLGQSTTVDKANEKAVRRMLPNG.

Basic residues-rich tracts occupy residues 1–11 (MPKIKTRRSAA) and 21–43 (KFKR…RKMR). A disordered region spans residues 1-65 (MPKIKTRRSA…KAVRRMLPNG (65 aa)).

It belongs to the bacterial ribosomal protein bL35 family.

The protein is Large ribosomal subunit protein bL35 of Desulfovibrio desulfuricans (strain ATCC 27774 / DSM 6949 / MB).